We begin with the raw amino-acid sequence, 468 residues long: Bone morphogenetic protein 3 (468 aa).

Positions 1 to 22 (MAGARGLLCLWLGYFCLNLAQG) are cleaved as a signal peptide. Residues 23–358 (QRPNLHLPGL…EQTLKKARRK (336 aa)) constitute a propeptide that is removed on maturation. Residues 29–53 (LPGLRETEPSDRATGGSPSPDLRPH) form a disordered region. 4 N-linked (GlcNAc...) asparagine glycosylation sites follow: asparagine 115, asparagine 139, asparagine 171, and asparagine 216. A disordered region spans residues 314-349 (RKPYKSLQTQPPEKSRNKKKQRKGSHQKGQTLQFDE). Positions 329–339 (RNKKKQRKGSH) are enriched in basic residues. Polar residues predominate over residues 340 to 349 (QKGQTLQFDE). Intrachain disulfides connect cysteine 366–cysteine 433, cysteine 395–cysteine 465, and cysteine 399–cysteine 467. N-linked (GlcNAc...) asparagine glycosylation is present at asparagine 459.

The protein belongs to the TGF-beta family. Homodimer; disulfide-linked.

The protein resides in the secreted. Its function is as follows. Negatively regulates bone density. Antagonizes the ability of certain osteogenic BMPs to induce osteoprogenitor differentiation and ossification. In Mus musculus (Mouse), this protein is Bone morphogenetic protein 3 (Bmp3).